Reading from the N-terminus, the 236-residue chain is 7-cyano-7-deazaguanine synthase 2 (236 aa).

Residue 11–21 coordinates ATP; that stretch reads FSGGQDSATCL. Positions 199, 214, 217, and 220 each coordinate Zn(2+).

Belongs to the QueC family. Zn(2+) serves as cofactor.

The catalysed reaction is 7-carboxy-7-deazaguanine + NH4(+) + ATP = 7-cyano-7-deazaguanine + ADP + phosphate + H2O + H(+). Its pathway is purine metabolism; 7-cyano-7-deazaguanine biosynthesis. Functionally, catalyzes the ATP-dependent conversion of 7-carboxy-7-deazaguanine (CDG) to 7-cyano-7-deazaguanine (preQ(0)). The protein is 7-cyano-7-deazaguanine synthase 2 of Sphingopyxis alaskensis (strain DSM 13593 / LMG 18877 / RB2256) (Sphingomonas alaskensis).